We begin with the raw amino-acid sequence, 759 residues long: Solute carrier family 26 member 6 (759 aa).

At 1 to 115 the chain is on the cytoplasmic side; it reads MGLADASGPR…PQGLAYALLA (115 aa). The chain crosses the membrane as a helical span at residues 116–136; the sequence is GLPPVFGLYSSFYPVFIYFLF. At 137–186 the chain is on the extracellular side; that stretch reads GTSRHISVGTFAVMSVMVGSVTESLAPQALNDSMINETARDAARVQVAST. Asparagine 167 and asparagine 172 each carry an N-linked (GlcNAc) asparagine glycan. Residues 187–207 form a helical membrane-spanning segment; it reads LSVLVGLFQVGLGLIHFGFVV. The Cytoplasmic portion of the chain corresponds to 208 to 263; the sequence is TYLSEPLVRGYTTAAAVQVFVSQLKYVFGLHLSSHSGPLSLIYTVLEVCWKLPQSK. A helical membrane pass occupies residues 264–284; that stretch reads VGTVVTAAVAGVVLVVVKLLN. The Extracellular segment spans residues 285-293; sequence DKLQQQLPM. The helical transmembrane segment at 294 to 314 threads the bilayer; it reads PIPGELLTLIGATGISYGMGL. Residues 315–347 are Cytoplasmic-facing; that stretch reads KHRFEVDVVGNIPAGLVPPVAPNTQLFSKLVGS. The helical transmembrane segment at 348 to 368 threads the bilayer; sequence AFTIAVVGFAIAISLGKIFAL. At 369-379 the chain is on the extracellular side; the sequence is RHGYRVDSNQE. A helical transmembrane segment spans residues 380 to 400; that stretch reads LVALGLSNLIGGIFQCFPVSC. Over 401–416 the chain is Cytoplasmic; sequence SMSRSLVQESTGGNSQ. Residues 417 to 437 traverse the membrane as a helical segment; that stretch reads VAGAISSLFILLIIVKLGELF. The Extracellular portion of the chain corresponds to 438-484; it reads HDLPKAVLAAIIIVNLKGMLRQLSDMRSLWKANRADLLIWLVTFTAT. Residues 485-505 traverse the membrane as a helical segment; it reads ILLNLDLGLVVAVIFSLLLVV. Residues 506–759 lie on the Cytoplasmic side of the membrane; the sequence is VRTQMPHYSV…PDSPVSVTRL (254 aa). The STAS domain maps to 530 to 742; that stretch reads EYSEAKEVRG…ASVHDAVTFA (213 aa). Phosphoserine; by PKC is present on residues asparagine 553 and lysine 582. Phosphoserine is present on serine 616. Residues 636–657 are disordered; that stretch reads GDKMEDATANGQEDSKAPDGST. Serine 752 and serine 755 each carry phosphoserine.

It belongs to the SLC26A/SulP transporter (TC 2.A.53) family. As to quaternary structure, interacts (via C-terminal domain) with PDZK1 (via C-terminal PDZ domain); the interaction induces chloride and oxalate exchange transport. Interacts with CFTR and SLC26A3. Interacts with AHCYL1; the interaction increases SLC26A6 activity. Interacts with NHERF1 (via the PDZ domains) and NHERF2 (via the PDZ domains). Interacts (via C-terminal cytoplasmic domain) with CA2; the interaction stimulates chloride-bicarbonate exchange activity. In terms of assembly, interacts with NHERF1 (via the PDZ domains) and NHERF2 (via the PDZ domains). Post-translationally, phosphorylated on serine residues by PKC; the phosphorylation disrupts interaction with carbonic anhydrase CA2 and reduces bicarbonate transport activity in a phorbol myristate acetate (PMA)-induced manner. In terms of processing, glycosylation at Asn-167 and Asn-172 positively regulates its chloride oxalate exchanger activity. As to expression, ubiquitous. Highest levels in kidney and pancreas. Lower expression in heart, skeletal muscle, liver and placenta. Also found in lung and brain. Ubiquitously expressed. Highest levels expressed in the kidney and pancreas. In terms of tissue distribution, expressed weakly in placenta, lung, liver and pancreas. As to expression, expressed in heart, brain, placenta, lung, liver, kidney, pancreas, spleen, thymus, prostate, testis and ovary.

The protein localises to the cell membrane. Its subcellular location is the apical cell membrane. The protein resides in the cytoplasmic vesicle membrane. It is found in the microsome. It localises to the basolateral cell membrane. The catalysed reaction is 2 hydrogencarbonate(in) + chloride(out) = 2 hydrogencarbonate(out) + chloride(in). It catalyses the reaction oxalate(in) + chloride(out) = oxalate(out) + chloride(in). The enzyme catalyses oxalate(in) + formate(out) = oxalate(out) + formate(in). It carries out the reaction oxalate(in) + sulfate(out) = oxalate(out) + sulfate(in). The catalysed reaction is 2 hydrogencarbonate(out) + sulfate(in) = 2 hydrogencarbonate(in) + sulfate(out). Its activity is regulated as follows. Oxalate transport activity is inhibited by 4,4'-diisothiocyanatostilbene-2,2'-disulfonic acid (DIDS). Chloride, bicarbonate and sulfate transport activities are inhibited by 4,4'-diisothiocyanatostilbene-2,2'-disulfonic acid (DIDS). Its function is as follows. Apical membrane anion-exchanger with wide epithelial distribution that plays a role as a component of the pH buffering system for maintaining acid-base homeostasis. Acts as a versatile DIDS-sensitive inorganic and organic anion transporter that mediates the uptake of monovalent anions like chloride, bicarbonate, formate and hydroxyl ion and divalent anions like sulfate and oxalate. Functions in multiple exchange modes involving pairs of these anions, which include chloride-bicarbonate, chloride-oxalate, oxalate-formate, oxalate-sulfate and chloride-formate exchange. Apical membrane chloride-bicarbonate exchanger that mediates luminal chloride absorption and bicarbonate secretion by the small intestinal brush border membrane and contributes to intracellular pH regulation in the duodenal upper villous epithelium during proton-coupled peptide absorption, possibly by providing a bicarbonate import pathway. Also mediates intestinal chloride absorption and oxalate secretion, thereby preventing hyperoxaluria and calcium oxalate urolithiasis. Transepithelial oxalate secretion, chloride-formate, chloride-oxalate and chloride-bicarbonate transport activities in the duodenum are inhibited by PKC activation in a calcium-independent manner. The apical membrane chloride-bicarbonate exchanger also provides a major route for fluid and bicarbonate secretion into the proximal tubules of the kidney as well as into the proximal part of the interlobular pancreatic ductal tree, where it mediates electrogenic chloride-bicarbonate exchange with a chloride-bicarbonate stoichiometry of 1:2, and hence will dilute and alkalinize protein-rich acinar secretion. Also mediates the transcellular sulfate absorption and oxalate secretion across the apical membrane in the duodenum and the formate ion efflux at the apical brush border of cells in the proximal tubules of kidney. Plays a role in sperm capacitation by increasing intracellular pH. In terms of biological role, apical membrane chloride-bicarbonate exchanger. Its association with carbonic anhydrase CA2 forms a bicarbonate transport metabolon; hence maximizes the local concentration of bicarbonate at the transporter site. This chain is Solute carrier family 26 member 6 (SLC26A6), found in Homo sapiens (Human).